The following is a 498-amino-acid chain: Cytotardin (498 aa).

The coil 1A stretch occupies residues aspartate 18 to glutamate 58. The region spanning serine 22–leucine 378 is the IF rod domain. Residues glutamine 59 to serine 69 are linker 1. Residues lysine 70–arginine 213 form a coil 1B region. The interval glutamine 214–lysine 231 is linker 2. Residues leucine 232 to leucine 371 form a coil 2 region. The tract at residues aspartate 381–threonine 425 is disordered. Gly residues predominate over residues glycine 393–glycine 409.

It belongs to the intermediate filament family.

It is found in the cytoplasm. The protein localises to the cell cortex. Intermediate filament (IF) protein that forms both short filaments and extensive cytoskeletal networks which most likely are homomeric. Some of the cytotardin arrays display cage-like perinuclear structures, while others are located in the periphery close to the cell membrane. The entire tardigrade body is ensheathed by a grid of belt-like filaments formed by the cytotardin protein, which retain their integrity even in contracted specimens. The belt-like structures encircling each epidermal cell might help to resist the shearing forces that arise during freezing and thawing cycles, whereas the dense meshwork at the basis of each claw and around the stylets might provide the tissue stability necessary for locomotion and feeding. This chain is Cytotardin, found in Hypsibius exemplaris (Freshwater tardigrade).